We begin with the raw amino-acid sequence, 152 residues long: Ribosomal RNA large subunit methyltransferase H (152 aa).

S-adenosyl-L-methionine-binding positions include leucine 69, glycine 96, and 118–123 (FGKLTF).

The protein belongs to the RNA methyltransferase RlmH family. In terms of assembly, homodimer.

It localises to the cytoplasm. It carries out the reaction pseudouridine(1915) in 23S rRNA + S-adenosyl-L-methionine = N(3)-methylpseudouridine(1915) in 23S rRNA + S-adenosyl-L-homocysteine + H(+). In terms of biological role, specifically methylates the pseudouridine at position 1915 (m3Psi1915) in 23S rRNA. The polypeptide is Ribosomal RNA large subunit methyltransferase H (Mesomycoplasma hyopneumoniae (strain 7448) (Mycoplasma hyopneumoniae)).